The sequence spans 93 residues: Protamine-3 (93 aa).

The interval 1–93 (MGSRCAKLGT…QSPEPKQTRS (93 aa)) is disordered. A compositionally biased stretch (acidic residues) spans 37–57 (EGEEEEEGEEEEEEEGEEEEL). Polar residues predominate over residues 81–93 (EVQQSPEPKQTRS). S85 is subject to Phosphoserine.

It belongs to the protamine P3 family.

Its subcellular location is the nucleus. The protein resides in the chromosome. Functionally, protamines substitute for histones in the chromatin of sperm during the haploid phase of spermatogenesis. They compact sperm DNA into a highly condensed, stable and inactive complex. In Bos taurus (Bovine), this protein is Protamine-3 (PRM3).